Reading from the N-terminus, the 310-residue chain is Acetyl-coenzyme A carboxylase carboxyl transferase subunit beta, chloroplastic (310 aa).

The region spanning 47 to 310 is the CoA carboxyltransferase N-terminal domain; sequence LWARCDNCGN…LYLSVPYNKN (264 aa). Zn(2+) is bound by residues Cys-51, Cys-54, Cys-70, and Cys-73. The segment at 51-73 adopts a C4-type zinc-finger fold; sequence CDNCGNMLYVKFLKQNRSVCEEC.

Belongs to the AccD/PCCB family. As to quaternary structure, acetyl-CoA carboxylase is a heterohexamer composed of biotin carboxyl carrier protein, biotin carboxylase and 2 subunits each of ACCase subunit alpha and ACCase plastid-coded subunit beta (accD). Zn(2+) serves as cofactor.

It localises to the plastid. Its subcellular location is the chloroplast stroma. It catalyses the reaction N(6)-carboxybiotinyl-L-lysyl-[protein] + acetyl-CoA = N(6)-biotinyl-L-lysyl-[protein] + malonyl-CoA. It participates in lipid metabolism; malonyl-CoA biosynthesis; malonyl-CoA from acetyl-CoA: step 1/1. Functionally, component of the acetyl coenzyme A carboxylase (ACC) complex. Biotin carboxylase (BC) catalyzes the carboxylation of biotin on its carrier protein (BCCP) and then the CO(2) group is transferred by the transcarboxylase to acetyl-CoA to form malonyl-CoA. The polypeptide is Acetyl-coenzyme A carboxylase carboxyl transferase subunit beta, chloroplastic (Adiantum capillus-veneris (Maidenhair fern)).